A 319-amino-acid polypeptide reads, in one-letter code: Methionyl-tRNA formyltransferase (319 aa).

Residue Ser112–Pro115 participates in (6S)-5,6,7,8-tetrahydrofolate binding.

The protein belongs to the Fmt family.

The enzyme catalyses L-methionyl-tRNA(fMet) + (6R)-10-formyltetrahydrofolate = N-formyl-L-methionyl-tRNA(fMet) + (6S)-5,6,7,8-tetrahydrofolate + H(+). In terms of biological role, attaches a formyl group to the free amino group of methionyl-tRNA(fMet). The formyl group appears to play a dual role in the initiator identity of N-formylmethionyl-tRNA by promoting its recognition by IF2 and preventing the misappropriation of this tRNA by the elongation apparatus. The polypeptide is Methionyl-tRNA formyltransferase (Shewanella denitrificans (strain OS217 / ATCC BAA-1090 / DSM 15013)).